A 1702-amino-acid polypeptide reads, in one-letter code: Dicer-like protein 4 (1702 aa).

Disordered regions lie at residues 1 to 52 and 89 to 120; these read MRDE…SAAT and SSSSVSSFSSSSSSLFSAAGTDDPSPKMEKDP. Positions 17 to 31 are enriched in basic and acidic residues; it reads GKRDREQKNCEEEKN. Residues 89–105 show a composition bias toward low complexity; the sequence is SSSSVSSFSSSSSSLFS. In terms of domain architecture, Helicase ATP-binding spans 131–307; it reads LCKKATEENV…SENLSKSINS (177 aa). ATP is bound at residue 144–151; the sequence is LGTGCGKT. A DECH box motif is present at residues 251–254; the sequence is DECH. The Helicase C-terminal domain occupies 475-629; that stretch reads QLIKILSVFR…RMNLEITYRS (155 aa). The Dicer dsRNA-binding fold domain occupies 656–748; the sequence is SISLLYKYCS…LPDSKDEIED (93 aa). In terms of domain architecture, PAZ spans 932-1054; the sequence is LVEDIFPPSG…IPPELSHLKI (123 aa). 2 RNase III domains span residues 1083-1251 and 1292-1436; these read ELKH…VDSG and LETL…LDCG. E1330, D1422, and E1425 together coordinate Mg(2+). DRBM domains are found at residues 1462-1528 and 1621-1697; these read SPIK…NLKA and TAKS…CLKH.

The protein belongs to the helicase family. Dicer subfamily. As to quaternary structure, interacts with DRB4. Requires Mg(2+) as cofactor. Mn(2+) is required as a cofactor.

It localises to the nucleus. In terms of biological role, ribonuclease (RNase) III involved in RNA-mediated post-transcriptional gene silencing (PTGS). Functions in the biogenesis of trans-acting small interfering RNAs (ta-siRNAs, derived from the TAS1, TAS2 or TAS3 endogenous transcripts) by cleaving small dsRNAs into 21-24 nucleotide ta-siRNAs. Functions with the dsRNA-binding protein DRB4 in ta-siRNAs processing. Acts in the RDR6/SGS3/DCL4/AGO7 ta-siRNA pathway involved in leaf developmental timing. Plays a role in transitive silencing of transgenes by processing secondary siRNAs. This pathway, which requires DCL2 and RDR6, amplifies silencing by using the target RNA as substrate to generate secondary siRNAs, providing an efficient mechanism for long-distance silencing. Required for the production of the 30-40 nucleotide bacterial-induced long siRNAs (lsiRNA). May participate with DCL3 in the production of 24 nucleotide repeat-associated siRNAs (ra-siRNAs) which derive from heterochromatin and DNA repeats such as transposons. Plays an important role in antiviral RNA silencing. Involved in the production of viral siRNAs derived from the cucumber mosaic virus (CMV), turnip crinkle virus (TCV) and tobacco rattle virus (TRV). Targeted by the viral silencing suppressor (VSR) protein 2b of the cucumber mosaic virus (CMV) that inactivates DCL4 function in RNA silencing. Does not seem to be involved in microRNAs (miRNAs) processing. In Arabidopsis thaliana (Mouse-ear cress), this protein is Dicer-like protein 4 (DCL4).